Reading from the N-terminus, the 808-residue chain is Phospholipase D alpha 1 (808 aa).

The propeptide occupies 1–30 (MAQISLHGTLHVTIYEVDKLHSGGGPHFFR). One can recognise a C2 domain in the interval 1 to 125 (MAQISLHGTL…LDGEEIDRWV (125 aa)). Asp186 provides a ligand contact to Ca(2+). In terms of domain architecture, PLD phosphodiesterase 1 spans 326–364 (TMFTHHQKIVVVDSAMPNGDSQRRRIVSFVGGLDLCDGR). Catalysis depends on residues His331, Lys333, and Asp338. A 1,2-diacyl-sn-glycero-3-phosphate is bound at residue His331. The Ca(2+) site is built by His370 and His404. A 1,2-diacyl-sn-glycero-3-phosphate contacts are provided by Gln520 and His659. Residues 654–681 (FMIYVHTKMMIVDDEYIIIGSANINQRS) enclose the PLD phosphodiesterase 2 domain. Catalysis depends on residues His659, Lys661, and Asp666. Glu720 is a binding site for Ca(2+).

Belongs to the phospholipase D family. C2-PLD subfamily. Requires Ca(2+) as cofactor. Expression is higher in radicle than in endosperm.

The protein resides in the cytoplasm. It localises to the membrane. The protein localises to the vacuole. It is found in the endoplasmic reticulum. Its subcellular location is the plastid. The protein resides in the cell membrane. The catalysed reaction is a 1,2-diacyl-sn-glycero-3-phosphocholine + H2O = a 1,2-diacyl-sn-glycero-3-phosphate + choline + H(+). Its function is as follows. Hydrolyzes glycerol-phospholipids at the terminal phosphodiesteric bond. Plays an important role in various cellular processes, including phytohormone action, vesicular trafficking, secretion, cytoskeletal arrangement, meiosis, tumor promotion, pathogenesis, membrane deterioration and senescence. In Ricinus communis (Castor bean), this protein is Phospholipase D alpha 1 (PLD1).